Reading from the N-terminus, the 418-residue chain is Mitochondrial distribution and morphology protein 10 (418 aa).

This sequence belongs to the MDM10 family. Component of the ER-mitochondria encounter structure (ERMES) or MDM complex, composed of MMM1, MDM10, MDM12 and MDM34. Associates with the mitochondrial outer membrane sorting assembly machinery SAM(core) complex.

The protein localises to the mitochondrion outer membrane. In terms of biological role, component of the ERMES/MDM complex, which serves as a molecular tether to connect the endoplasmic reticulum and mitochondria. Components of this complex are involved in the control of mitochondrial shape and protein biogenesis and may function in phospholipid exchange. MDM10 is involved in the late assembly steps of the general translocase of the mitochondrial outer membrane (TOM complex). Functions in the TOM40-specific route of the assembly of outer membrane beta-barrel proteins, including the association of TOM40 with the receptor TOM22 and small TOM proteins. Can associate with the SAM(core) complex as well as the MDM12-MMM1 complex, both involved in late steps of the major beta-barrel assembly pathway, that is responsible for biogenesis of all outer membrane beta-barrel proteins. May act as a switch that shuttles between both complexes and channels precursor proteins into the TOM40-specific pathway. Plays a role in mitochondrial morphology and in the inheritance of mitochondria. This Meyerozyma guilliermondii (strain ATCC 6260 / CBS 566 / DSM 6381 / JCM 1539 / NBRC 10279 / NRRL Y-324) (Yeast) protein is Mitochondrial distribution and morphology protein 10.